Here is a 684-residue protein sequence, read N- to C-terminus: uncharacterized protein (684 aa).

The 186-residue stretch at 54 to 239 (LKYLYNKKDV…LLFNRDFEVV (186 aa)) folds into the Helicase ATP-binding domain. 67 to 74 (TSTASGKS) lines the ATP pocket. The short motif at 181 to 184 (DELH) is the DEVH box element. A Helicase C-terminal domain is found at 264–419 (LLRRLIENLV…YMPVNIKNRF (156 aa)).

This sequence belongs to the helicase family.

This is an uncharacterized protein from Methanocaldococcus jannaschii (strain ATCC 43067 / DSM 2661 / JAL-1 / JCM 10045 / NBRC 100440) (Methanococcus jannaschii).